The sequence spans 180 residues: MAAAEEEDGGPEGPNRERGGAGATFECNICLETAREAVVSVCGHLYCWPCLHQWLETRPERQECPVCKAGISREKVVPLYGRGSQKPQDPRLKTPPRPQGQRPAPESRGGFQPFGDTGGFHFSFGVGAFPFGFFTTVFNAHEPFRRGTGVDLGQGHPASSWQDSLFLFLAIFFFFWLLSI.

An N-acetylalanine modification is found at A2. The RING-type zinc finger occupies 27–68 (CNICLETAREAVVSVCGHLYCWPCLHQWLETRPERQECPVCK). The interval 79-110 (LYGRGSQKPQDPRLKTPPRPQGQRPAPESRGG) is disordered. Phosphoserine is present on S84. T94 is subject to Phosphothreonine. At S107 the chain carries Phosphoserine. The next 2 helical transmembrane spans lie at 118–138 (GGFHFSFGVGAFPFGFFTTVF) and 160–180 (SWQDSLFLFLAIFFFFWLLSI).

This sequence belongs to the RNF5 family. In terms of assembly, interacts with PXN. Interacts with Salmonella typhimurium sopA. Interacts with JKAMP. Interacts with STING1; the interaction of endogenous proteins is dependent on viral infection. Widely expressed.

Its subcellular location is the cell membrane. It localises to the mitochondrion membrane. It is found in the endoplasmic reticulum membrane. The catalysed reaction is S-ubiquitinyl-[E2 ubiquitin-conjugating enzyme]-L-cysteine + [acceptor protein]-L-lysine = [E2 ubiquitin-conjugating enzyme]-L-cysteine + N(6)-ubiquitinyl-[acceptor protein]-L-lysine.. Its pathway is protein modification; protein ubiquitination. Its function is as follows. Membrane-bound E3 ubiquitin-protein ligase that mediates ubiquitination of target proteins. May function together with E2 ubiquitin-conjugating enzymes UBE2D1/UBCH5A and UBE2D2/UBC4. Mediates ubiquitination of PXN/paxillin,thereby regulating cell motility and localization of PXN/paxillin. Catalyzes ubiquitination of Salmonella type III secreted protein sopA. Mediates the 'Lys-63'-linked polyubiquitination of JKAMP thereby regulating JKAMP function by decreasing its association with components of the proteasome and ERAD; the ubiquitination appears to involve E2 ubiquitin-conjugating enzyme UBE2N. Mediates the 'Lys-48'-linked polyubiquitination of STING1 at 'Lys-150' leading to its proteasomal degradation; the ubiquitination occurs in mitochondria after viral transfection and regulates antiviral responses. Catalyzes ubiquitination and subsequent degradation of ATG4B, thereby inhibiting autophagy. This chain is E3 ubiquitin-protein ligase RNF5, found in Homo sapiens (Human).